The following is a 62-amino-acid chain: Inner membrane protein p12 (62 aa).

Residues 16-36 (LLIVAIVVVIMAIMLYYFWWM) form a helical membrane-spanning segment.

This sequence belongs to the asfivirus inner membrane protein p12 family. As to quaternary structure, homomultimer; disulfide-linked. Not glycosylated.

The protein resides in the virion membrane. The polypeptide is Inner membrane protein p12 (African swine fever virus (isolate Pig/Kenya/KEN-50/1950) (ASFV)).